A 442-amino-acid polypeptide reads, in one-letter code: MREREPSLVYAFRQSTPYVNVHRGATFVLMMGGEAICHPNFANIVSDIALLQTLGIRLVLVFGSRPQNDEALARAGIEAQYHRRIRVTDDESFAIIKQVCGGLQYDITAQLSMGLANTPMQEARISVVSGNFVTAQPLGVDDGIDFCHSGRVRRIDVEGITRQLDQKGLVLISPIGCSVTGESFNLSSEEVARRVAVDLKADKLICFSSTQGVMDRHGEAISELFPEQAEELLVELEQAGEEMSGTARYLRAAIASCRGGVPRSHLVSYQDDGAMLQELFSRDGLGTQIVRESAEQARAATIEDIGGILDLIRPLEEDGILVRRSREQLEMEIDKFTIIERDGLIIGCAALYCFMEEAMAEMACVAIHPEYRNSNRGDQLVAKVAERAKRLGIRRLFVLTTRSIHWFRERGFDPLEVEDLPVERQRLYNWQRRSKVLSKTIS.

Positions 295–442 (EQARAATIED…RSKVLSKTIS (148 aa)) constitute an N-acetyltransferase domain.

Belongs to the acetyltransferase family. ArgA subfamily.

It is found in the cytoplasm. It catalyses the reaction L-glutamate + acetyl-CoA = N-acetyl-L-glutamate + CoA + H(+). It participates in amino-acid biosynthesis; L-arginine biosynthesis; N(2)-acetyl-L-ornithine from L-glutamate: step 1/4. The chain is Amino-acid acetyltransferase from Aeromonas salmonicida (strain A449).